A 41-amino-acid polypeptide reads, in one-letter code: Large ribosomal subunit protein bL36 (41 aa).

This sequence belongs to the bacterial ribosomal protein bL36 family.

This Xylella fastidiosa (strain 9a5c) protein is Large ribosomal subunit protein bL36.